Reading from the N-terminus, the 235-residue chain is 2,3-bisphosphoglycerate-dependent phosphoglycerate mutase (235 aa).

Substrate contacts are provided by residues 8 to 15 (RHGESIWN), 21 to 22 (TG), Arg-58, 110 to 113 (ERYY), Lys-121, 137 to 138 (RR), and 181 to 182 (GN). His-9 (tele-phosphohistidine intermediate) is an active-site residue. Glu-110 acts as the Proton donor/acceptor in catalysis.

It belongs to the phosphoglycerate mutase family. BPG-dependent PGAM subfamily.

It catalyses the reaction (2R)-2-phosphoglycerate = (2R)-3-phosphoglycerate. The protein operates within carbohydrate degradation; glycolysis; pyruvate from D-glyceraldehyde 3-phosphate: step 3/5. Functionally, catalyzes the interconversion of 2-phosphoglycerate and 3-phosphoglycerate. This Methanococcus vannielii (strain ATCC 35089 / DSM 1224 / JCM 13029 / OCM 148 / SB) protein is 2,3-bisphosphoglycerate-dependent phosphoglycerate mutase.